The sequence spans 56 residues: MDRRLLEILACPICKGKLVYSQDEQELICRFDKLAYPIHDGIPVMLPDSTRPLIER.

Belongs to the UPF0434 family.

The chain is UPF0434 protein CbuK_1382 from Coxiella burnetii (strain CbuK_Q154) (Coxiella burnetii (strain Q154)).